Consider the following 197-residue polypeptide: Guanylate kinase (197 aa).

One can recognise a Guanylate kinase-like domain in the interval 10–187 (GSLFIVSAPA…AYQVLRSILI (178 aa)). 17-24 (APAGTGKT) contacts ATP.

The protein belongs to the guanylate kinase family.

The protein resides in the cytoplasm. It carries out the reaction GMP + ATP = GDP + ADP. Essential for recycling GMP and indirectly, cGMP. The protein is Guanylate kinase of Protochlamydia amoebophila (strain UWE25).